The chain runs to 435 residues: Probable exopolygalacturonase B (435 aa).

A signal peptide spans 1–15 (MKFFLATLFASAVSS). N-linked (GlcNAc...) asparagine glycosylation is found at Asn-59, Asn-184, and Asn-224. 5 PbH1 repeats span residues 208–239 (SKDV…DSLN), 240–261 (VDGL…SPKP), 262–283 (NTTN…SMGS), 294–315 (IEHA…RLKA), and 326–347 (INNI…VLDQ). Asp-254 acts as the Proton donor in catalysis. A disulfide bond links Cys-256 and Cys-273. N-linked (GlcNAc...) asparagine glycans are attached at residues Asn-262 and Asn-274. His-277 is a catalytic residue. 4 N-linked (GlcNAc...) asparagine glycosylation sites follow: Asn-301, Asn-328, Asn-365, and Asn-373. One copy of the PbH1 6 repeat lies at 366 to 388 (VTNILFENISGTSSGKNGKVVAD). The cysteines at positions 391 and 397 are disulfide-linked. N-linked (GlcNAc...) asparagine glycosylation is present at Asn-406.

It belongs to the glycosyl hydrolase 28 family.

It localises to the secreted. It carries out the reaction [(1-&gt;4)-alpha-D-galacturonosyl](n) + H2O = alpha-D-galacturonate + [(1-&gt;4)-alpha-D-galacturonosyl](n-1). Its function is as follows. Specific in hydrolyzing the terminal glycosidic bond of polygalacturonic acid and oligogalacturonates. The sequence is that of Probable exopolygalacturonase B (pgxB) from Aspergillus flavus (strain ATCC 200026 / FGSC A1120 / IAM 13836 / NRRL 3357 / JCM 12722 / SRRC 167).